We begin with the raw amino-acid sequence, 347 residues long: Fe(2+) transport protein 1 (347 aa).

A signal peptide spans 1–22 (MASNSALLMKTIFLVLIFVSFA). The Extracellular segment spans residues 23-52 (ISPATSTAPEECGSESANPCVNKAKALPLK). A helical membrane pass occupies residues 53 to 73 (VIAIFVILIASMIGVGAPLFS). Over 74–84 (RNVSFLQPDGN) the chain is Cytoplasmic. A helical membrane pass occupies residues 85 to 105 (IFTIIKCFASGIILGTGFMHV). Topologically, residues 106–125 (LPDSFEMLSSICLEENPWHK) are extracellular. A helical transmembrane segment spans residues 126–146 (FPFSGFLAMLSGLITLAIDSM). The Cytoplasmic segment spans residues 147-192 (ATSLYTSKNAVGIMPHGHGHGHGPANDVTLPIKEDDSSNAQLLRYR). Glycyl lysine isopeptide (Lys-Gly) (interchain with G-Cter in ubiquitin) cross-links involve residues Lys154 and Lys179. A helical transmembrane segment spans residues 193-213 (VIAMVLELGIIVHSVVIGLSL). The Extracellular segment spans residues 214 to 224 (GATSDTCTIKG). Residues 225–245 (LIAALCFHQMFEGMGLGGCIL) traverse the membrane as a helical segment. Residues 246-254 (QAEYTNMKK) are Cytoplasmic-facing. A helical transmembrane segment spans residues 255–275 (FVMAFFFAVTTPFGIALGIAL). Residues 276-286 (STVYQDNSPKA) lie on the Extracellular side of the membrane. The helical transmembrane segment at 287–307 (LITVGLLNACSAGLLIYMALV) threads the bilayer. Residues 308-326 (DLLAAEFMGPKLQGSIKMQ) lie on the Cytoplasmic side of the membrane. Residues 327–347 (FKCLIAALLGCGGMSIIAKWA) traverse the membrane as a helical segment.

The protein belongs to the ZIP transporter (TC 2.A.5) family. As to quaternary structure, interacts with FREE1. Post-translationally, monoubiquitinated on several Lys residues. Monoubiquitination controls trafficking from the plasma membrane and targeting to the vacuole. As to expression, expressed in the external cell layers of the root including the lateral branching zone. Also detected in flowers before pollination.

It localises to the cell membrane. It is found in the early endosome. The protein localises to the golgi apparatus. Its subcellular location is the trans-Golgi network. The protein resides in the vacuole. High-affinity iron transporter that plays a key role in the uptake of iron from the rhizosphere across the plasma membrane in the root epidermal layer. Acts as the principal regulator of iron homeostasis in planta. Also mediates the heavy metals uptake under iron-deficiency by its ability to transport cobalt, cadmium, manganese and/or zinc ions. The polypeptide is Fe(2+) transport protein 1 (IRT1) (Arabidopsis thaliana (Mouse-ear cress)).